We begin with the raw amino-acid sequence, 918 residues long: UPF0182 protein CPF_0011 (918 aa).

The next 7 membrane-spanning stretches (helical) occupy residues 8–28, 46–66, 91–111, 151–171, 200–220, 243–263, and 271–291; these read TVLISILLLVVVFFVSTNFII, LIAICKLFVPIFILYFCVIAI, FLLSNLVISILGAGATATTQW, AISLIIILVLITVIIYLALGF, LAVLASVLSLLIGCSYLLKSY, IFYKVIAVACVISSIVVFISI, and IIISIASIAVLIVLEPVVAIF. The segment covering 857 to 869 has biased composition (basic and acidic residues); sequence EENKNSNKDETPK. The interval 857–876 is disordered; the sequence is EENKNSNKDETPKNEITSDN.

Belongs to the UPF0182 family.

It localises to the cell membrane. The chain is UPF0182 protein CPF_0011 from Clostridium perfringens (strain ATCC 13124 / DSM 756 / JCM 1290 / NCIMB 6125 / NCTC 8237 / Type A).